Here is a 322-residue protein sequence, read N- to C-terminus: Ferredoxin--NADP reductase (322 aa).

The FAD site is built by serine 14, aspartate 33, glutamine 41, tyrosine 46, alanine 86, phenylalanine 120, aspartate 278, and serine 319.

Belongs to the ferredoxin--NADP reductase type 2 family. As to quaternary structure, homodimer. FAD serves as cofactor.

It catalyses the reaction 2 reduced [2Fe-2S]-[ferredoxin] + NADP(+) + H(+) = 2 oxidized [2Fe-2S]-[ferredoxin] + NADPH. The protein is Ferredoxin--NADP reductase of Salinispora arenicola (strain CNS-205).